The primary structure comprises 458 residues: Estrogen-related receptor gamma (458 aa).

Lysine 40 participates in a covalent cross-link: Glycyl lysine isopeptide (Lys-Gly) (interchain with G-Cter in SUMO). The span at 42 to 52 (EPSSPASLTDS) shows a compositional bias: polar residues. The disordered stretch occupies residues 42-85 (EPSSPASLTDSVNHHSPGGSSDASGSYSSTMNGHQNGLDSPPLY). The residue at position 45 (serine 45) is a Phosphoserine. Over residues 57–70 (SPGGSSDASGSYSS) the composition is skewed to low complexity. The segment at residues 125-200 (KRLCLVCGDI…VGMLKEGVRL (76 aa)) is a DNA-binding region (nuclear receptor). 2 NR C4-type zinc fingers span residues 128–148 (CLVCGDIASGYHYGVASCEAC) and 164–188 (CPATNECEITKRRRKSCQACRFMKC). The NR LBD domain occupies 233–457 (PYNKIVSHLL…KLFLEMLEAK (225 aa)).

It belongs to the nuclear hormone receptor family. NR3 subfamily. As to quaternary structure, homodimer. Binds TLE1, PNRC1 and PNRC2. Binds GRIP1. Interacts with NRIP1, NCOA1 and NCOR2. Post-translationally, acetylated by PCAF/KAT2 (in vitro). In terms of processing, sumoylation on Lys-40 is enhanced by phosphorylation at Ser-45 and represses transcriptional activity. Phosphorylation on Ser-45 enhances sumoylation on Lys-40 thus repressing transcriptional activity. Expressed in the heart, kidney, brain, lung, bone marrow, adrenal gland, trachea, spinal cord and thyroid gland.

Its subcellular location is the nucleus. Functionally, orphan receptor that acts as a transcription activator in the absence of bound ligand. Binds specifically to an estrogen response element and activates reporter genes controlled by estrogen response elements. Induces the expression of PERM1 in the skeletal muscle. This Homo sapiens (Human) protein is Estrogen-related receptor gamma (ESRRG).